The primary structure comprises 93 residues: MSRSIKKGPFIDDHLMKKTLKAKEGKDNRPIKTWSRRSTILPEMIGFTYNVHNGRVFVPVYITENHVGYKLGEFAPTRTFKGHKGSVQKKIGK.

The protein belongs to the universal ribosomal protein uS19 family.

Its function is as follows. Protein S19 forms a complex with S13 that binds strongly to the 16S ribosomal RNA. The chain is Small ribosomal subunit protein uS19 from Helicobacter pylori (strain G27).